The following is a 502-amino-acid chain: Keratin-associated protein 16-1 (502 aa).

15 repeat units span residues 4 to 8 (CCCSR), 58 to 62 (CCQPS), 73 to 77 (CCEAT), 93 to 97 (CCEAT), 108 to 112 (CCQPV), 113 to 117 (CCEAT), 133 to 137 (CCEAT), 152 to 156 (CCETS), 177 to 181 (CCQPV), 187 to 191 (CCSAV), 212 to 216 (CCQPV), 222 to 226 (CCPSV), 272 to 276 (CCVQG), 292 to 296 (CCVSS), and 347 to 351 (CCRPG). Residues 73 to 307 (CCEATICEPS…CQPVCPEPSP (235 aa)) are 15 X 5 AA repeats of C-C-X(3). The interval 435 to 502 (RQPCTDSDND…QPAASKPADR (68 aa)) is disordered. Positions 489 to 502 (AAAPQPAASKPADR) are enriched in low complexity.

The protein belongs to the KRTAP type 16 family. Interacts with hair keratins.

Functionally, in the hair cortex, hair keratin intermediate filaments are embedded in an interfilamentous matrix, consisting of hair keratin-associated proteins (KRTAP), which are essential for the formation of a rigid and resistant hair shaft through their extensive disulfide bond cross-linking with abundant cysteine residues of hair keratins. The matrix proteins include the high-sulfur and high-glycine-tyrosine keratins. The sequence is that of Keratin-associated protein 16-1 (Krtap16-1) from Mus musculus (Mouse).